The following is a 283-amino-acid chain: ATP phosphoribosyltransferase (283 aa).

It belongs to the ATP phosphoribosyltransferase family. Long subfamily. The cofactor is Mg(2+).

It is found in the cytoplasm. The enzyme catalyses 1-(5-phospho-beta-D-ribosyl)-ATP + diphosphate = 5-phospho-alpha-D-ribose 1-diphosphate + ATP. The protein operates within amino-acid biosynthesis; L-histidine biosynthesis; L-histidine from 5-phospho-alpha-D-ribose 1-diphosphate: step 1/9. Its activity is regulated as follows. Feedback inhibited by histidine. In terms of biological role, catalyzes the condensation of ATP and 5-phosphoribose 1-diphosphate to form N'-(5'-phosphoribosyl)-ATP (PR-ATP). Has a crucial role in the pathway because the rate of histidine biosynthesis seems to be controlled primarily by regulation of HisG enzymatic activity. This Rhodococcus opacus (strain B4) protein is ATP phosphoribosyltransferase.